Here is a 213-residue protein sequence, read N- to C-terminus: Cytochrome c biogenesis ATP-binding export protein CcmA (213 aa).

Positions 11–213 constitute an ABC transporter domain; that stretch reads LTARNLECIR…TVTVHHLVLS (203 aa). 43 to 50 is an ATP binding site; sequence GPNGSGKT.

It belongs to the ABC transporter superfamily. CcmA exporter (TC 3.A.1.107) family. In terms of assembly, the complex is composed of two ATP-binding proteins (CcmA) and two transmembrane proteins (CcmB).

Its subcellular location is the cell inner membrane. It catalyses the reaction heme b(in) + ATP + H2O = heme b(out) + ADP + phosphate + H(+). Functionally, part of the ABC transporter complex CcmAB involved in the biogenesis of c-type cytochromes; once thought to export heme, this seems not to be the case, but its exact role is uncertain. Responsible for energy coupling to the transport system. The protein is Cytochrome c biogenesis ATP-binding export protein CcmA of Nitrosomonas europaea (strain ATCC 19718 / CIP 103999 / KCTC 2705 / NBRC 14298).